Here is a 1374-residue protein sequence, read N- to C-terminus: DNA-directed RNA polymerase subunit beta' (1374 aa).

The disordered stretch occupies residues Met1–Phe47. A compositionally biased stretch (basic residues) spans Lys7 to Ala28. Residues Ala29–Ala39 show a composition bias toward low complexity. Positions 258, 325, 332, and 335 each coordinate Zn(2+). The interval Arg1344 to Glu1374 is disordered. Positions Leu1362–Glu1374 are enriched in low complexity.

The protein belongs to the RNA polymerase beta' chain family. RpoC2 subfamily. As to quaternary structure, in cyanobacteria the RNAP catalytic core is composed of 2 alpha, 1 beta, 1 beta', 1 gamma and 1 omega subunit. When a sigma factor is associated with the core the holoenzyme is formed, which can initiate transcription. Zn(2+) serves as cofactor.

It carries out the reaction RNA(n) + a ribonucleoside 5'-triphosphate = RNA(n+1) + diphosphate. Functionally, DNA-dependent RNA polymerase catalyzes the transcription of DNA into RNA using the four ribonucleoside triphosphates as substrates. The protein is DNA-directed RNA polymerase subunit beta' of Prochlorococcus marinus (strain MIT 9313).